The following is a 514-amino-acid chain: Voltage-gated potassium channel regulatory subunit KCNG1 (514 aa).

The Cytoplasmic portion of the chain corresponds to 1–224 (MTLLPGDNSH…DMVERPHSGL (224 aa)). Over residues 180-196 (MEREEEEEPLDSEDQES) the composition is skewed to acidic residues. The interval 180-205 (MEREEEEEPLDSEDQESEGPSASEGR) is disordered. A helical membrane pass occupies residues 225–246 (PGKVFACLSVLFVTVTAVNLSV). The Extracellular segment spans residues 247–267 (STLPSLREEEEQGQCSQMCHN). A helical transmembrane segment spans residues 268–289 (VFIVESVCVGWFSLEFLLRFIQ). The Cytoplasmic portion of the chain corresponds to 290–300 (APSKFAFLRSP). The helical transmembrane segment at 301 to 321 (LTLIDLVAILPYYVTLLVDGA) threads the bilayer. The Extracellular segment spans residues 322–338 (ASSRRKPSTGNSYLDKV). Residues 339-359 (GLVLRVLRALRILYVMRLARH) form a helical; Voltage-sensor membrane-spanning segment. The Cytoplasmic portion of the chain corresponds to 360–374 (SLGLQTLGLTARRCT). The helical transmembrane segment at 375–396 (REFGLLLLFLCVAIALFAPLLY) threads the bilayer. Residues 397 to 411 (VIENEMADSPEFTSI) are Extracellular-facing. The segment at residues 412-423 (PACYWWAVITMT) is an intramembrane region (helical). Positions 424 to 429 (TVGYGD) match the Selectivity filter motif. The stretch at 424–431 (TVGYGDMV) is an intramembrane region. Residues 432–438 (PRSTPGQ) are Extracellular-facing. The chain crosses the membrane as a helical span at residues 439 to 467 (VVALSSILSGILLMAFPVTSIFHTFSRSY). The Cytoplasmic segment spans residues 468-514 (LELKQEQERVLIRRAQYLIKTKSQLSGMSQDSDILFGSASSDTRDNN).

It belongs to the potassium channel family. G (TC 1.A.1.2) subfamily. Kv6.1/KCNG1 sub-subfamily. As to quaternary structure, heterotetramer with KCNB1 or KCNB2.

The protein resides in the cell membrane. In terms of biological role, regulatory alpha-subunit of the voltage-gated potassium (Kv) channel which, when coassembled with KCNB1 or KCNB2, can modulate their expression and their gating kinetics by acting on deactivation upon repolarization and inactivation during maintained depolarization. Potassium channel subunit that does not form functional channels by itself. The protein is Voltage-gated potassium channel regulatory subunit KCNG1 of Mus musculus (Mouse).